The following is a 338-amino-acid chain: MYVLVTGGSGYIGSHTCVQLIEAGYKPVILDNLCNSKSSVLARIHSLTGYTPELYAGDIRDRTLLDSIFAAHPIHAVIHFAGLKAVGESVNRPLEYYNNNVFGTLVLLEAMRAAQVKNLIFSSSATVYGDQPQIPYVESFPTGSPSSPYGRSKLMVEQILQDVQLADPQWNMTILRYFNPVGAHPSGLMGEDPQGIPNNLMPFIAQVAVGRRESLAIFGNGYPTPDGTGVRDYIHVVDLADGHVAAMKTLHGKPGVHIFNLGAGVGHSVLQVVAAFSKACGKPLAYHFAPRREGDLPAYWADATKAAEQLGWRVSRSLDEMAADTWHWQSKNPQGYPD.

NAD(+)-binding positions include 11–12, 31–36, 58–59, 80–84, asparagine 99, serine 124, tyrosine 149, lysine 153, and phenylalanine 178; these read YI, DNLCNS, DI, and FAGLK. Residues serine 124 and tyrosine 149 each coordinate substrate. Residue tyrosine 149 is the Proton acceptor of the active site. Residues asparagine 179, 199-200, 216-218, arginine 231, 292-295, and tyrosine 299 contribute to the substrate site; these read NL, AIF, and REGD.

It belongs to the NAD(P)-dependent epimerase/dehydratase family. In terms of assembly, homodimer. NAD(+) serves as cofactor.

The enzyme catalyses UDP-alpha-D-glucose = UDP-alpha-D-galactose. Its pathway is carbohydrate metabolism; galactose metabolism. Involved in the metabolism of galactose. Catalyzes the conversion of UDP-galactose (UDP-Gal) to UDP-glucose (UDP-Glc) through a mechanism involving the transient reduction of NAD. The polypeptide is UDP-glucose 4-epimerase (galE) (Yersinia pestis).